The sequence spans 489 residues: Type II restriction enzyme Sau3AI (489 aa).

The cofactor is Mg(2+).

The catalysed reaction is Endonucleolytic cleavage of DNA to give specific double-stranded fragments with terminal 5'-phosphates.. An E and P subtype restriction enzyme that recognizes the double-stranded sequence 5'-GATC-3' and cleaves before G-1. This is Type II restriction enzyme Sau3AI (sau3AIR) from Staphylococcus aureus.